The chain runs to 402 residues: Phosphoglycerate kinase (402 aa).

Residues 24–26 (DFN), Arg-40, 63–66 (HFGR), Arg-122, and Arg-155 each bind substrate. ATP is bound by residues Lys-206, Gly-297, Glu-328, and 357–360 (GGDS).

This sequence belongs to the phosphoglycerate kinase family. In terms of assembly, monomer.

It localises to the cytoplasm. The enzyme catalyses (2R)-3-phosphoglycerate + ATP = (2R)-3-phospho-glyceroyl phosphate + ADP. The protein operates within carbohydrate degradation; glycolysis; pyruvate from D-glyceraldehyde 3-phosphate: step 2/5. In Synechococcus sp. (strain ATCC 27144 / PCC 6301 / SAUG 1402/1) (Anacystis nidulans), this protein is Phosphoglycerate kinase.